A 527-amino-acid polypeptide reads, in one-letter code: Cytochrome P450 monooygenase 3 (527 aa).

A helical transmembrane segment spans residues 21–41 (IAVAFAALCGATGLLAFSWWI). Residue Cys-473 coordinates heme.

Belongs to the cytochrome P450 family. The cofactor is heme.

It is found in the membrane. It participates in plant hormone biosynthesis; gibberellin biosynthesis. Gibberellin 13-hydroxylase; part of the gene cluster that mediates the biosynthesis of gibberellins (GAs), diterpenoids that may provide a selective advantage during infection of the preferred host plant, rice. Gibberellins (GAs) are diterpenoids and are synthesized via the mevalonate pathway. Biosynthesis of the major metabolite GA3 (gibberellic acid) from geranylgeranyl diphosphate (GGPP) requires 13 steps. The GGPP produced by the geranylgeranyl diphosphate synthase GGS2 is converted to ent-kaurene via ent-copalyldiphosphate in a two-step cyclization reaction performed by the bifunctional ent-copalyl diphosphate synthase/ent-kaurene synthase enzyme (CPS/KS). Ent-Kaurene is metabolized to GAs by a series of oxidation reactions catalyzed by cytochrome P450 monooxygenases. Cytochrome P450 monooxygenase P450-4 is an ent-kaurene oxidase that catalyzes the three oxidation steps between ent-kaurene and ent-kaurenoic acid. The highly multifunctional cytochrome P450 monooxygenase P450-1 then catalyzes four steps involving oxidation at two carbon atoms, in the main pathway from ent-kaurenoic acid to GA14 via GA12-aldehyde as well as producing kaurenolides and fujenoic acids as by-products. The cytochrome P450 monooxygenase P450-2 then converts GA14 to GA4 by removal of C-20. GA4 is further converted to GA7 by the GA4 desaturase DES via 1,2-desaturation before cytochrome P450 monooxygenase P450-3, a 13-hydroxylase, hydroxylates GA7 to GA3, the final product of the GA-biosynthetic pathway. This chain is Cytochrome P450 monooygenase 3, found in Gibberella fujikuroi (strain CBS 195.34 / IMI 58289 / NRRL A-6831) (Bakanae and foot rot disease fungus).